Consider the following 515-residue polypeptide: Tetratricopeptide repeat protein 8 (515 aa).

Residues 4 to 37 (EMEPLLRAWSYFRRRKFQLCADLCTQMLEKSPYD) form a TPR 1 repeat. 2 disordered regions span residues 89–109 (RPGT…TQAV) and 118–137 (PITG…TMEQ). TPR repeat units follow at residues 225–258 (WWWK…QEMV), 259–291 (DTFL…FPGE), 292–325 (VTLL…DNTH), 326–359 (VEAI…GVYN), 360–393 (CQLF…AENE), 397–430 (ADVW…NNHH), and 432–464 (EAYN…APHM).

As to quaternary structure, part of BBSome complex, that contains BBS1, BBS2, BBS4, BBS5, BBS7, BBS8/TTC8, BBS9 and BBIP10. Interacts with PCM1. Interacts with CCDC28B. Interacts with PKD1. As to expression, isoform 1 is retina-specific whereas isoform 2 is ubiquitously expressed.

It localises to the cytoplasm. It is found in the cytoskeleton. Its subcellular location is the microtubule organizing center. The protein resides in the centrosome. The protein localises to the centriole. It localises to the cell projection. It is found in the cilium membrane. Its subcellular location is the centriolar satellite. The protein resides in the cilium. Its function is as follows. The BBSome complex is thought to function as a coat complex required for sorting of specific membrane proteins to the primary cilia. The BBSome complex is required for ciliogenesis but is dispensable for centriolar satellite function. This ciliogenic function is mediated in part by the Rab8 GDP/GTP exchange factor, which localizes to the basal body and contacts the BBSome. Rab8(GTP) enters the primary cilium and promotes extension of the ciliary membrane. Firstly the BBSome associates with the ciliary membrane and binds to RAB3IP/Rabin8, the guanosyl exchange factor (GEF) for Rab8 and then the Rab8-GTP localizes to the cilium and promotes docking and fusion of carrier vesicles to the base of the ciliary membrane. The BBSome complex, together with the LTZL1, controls SMO ciliary trafficking and contributes to the sonic hedgehog (SHH) pathway regulation. Required for proper BBSome complex assembly and its ciliary localization. The protein is Tetratricopeptide repeat protein 8 (Ttc8) of Mus musculus (Mouse).